Reading from the N-terminus, the 420-residue chain is MTDSRKNKRPRKSILRPVTGPNALHLSDIFRNETTGGMLMLAATVAALLWANLGHHSYHFFRELALGPLTIEQWAADGLLTVFFFIAGLELKREFVEGSLSRPADALVPIVAAVCGMVFPAGIYTLFNVLASDGHPAGWAIPMATDIAFALAVLAIVGAGLPQAVRAFLLTLAIADDLGSIIVIAVFFSTGLDIWWLAGAIACIGLWGVMQHFHVDNGWWYVPIFIVGWWCMLRSGVHATIAGVAFGLLTRTEEDVLDDPVDRWQHKVEPWSAGVVVPFFALMSAGVHVSGKTFLALWTHPISLGIVCGLILGKVIGITLGSCLTARFTSAELGRGVVWRDIIAVAVLAGIGFTVSMLMTDLSFPKNHEFADEAKASVLMASFLAAILGGAMLHHRGKSHAMRQTKHSHEVPVAAGTCND.

The next 10 helical transmembrane spans lie at 34–54, 69–89, 107–127, 141–161, 168–190, 194–213, 271–291, 301–321, 342–362, and 374–394; these read TTGG…ANLG, LTIE…IAGL, LVPI…YTLF, IPMA…GAGL, FLLT…FFST, IWWL…MQHF, WSAG…HVSG, PISL…ITLG, IIAV…MTDL, and AKAS…AMLH.

Belongs to the NhaA Na(+)/H(+) (TC 2.A.33) antiporter family.

It is found in the cell membrane. The catalysed reaction is Na(+)(in) + 2 H(+)(out) = Na(+)(out) + 2 H(+)(in). Functionally, na(+)/H(+) antiporter that extrudes sodium in exchange for external protons. The polypeptide is Na(+)/H(+) antiporter NhaA (Cutibacterium acnes (strain DSM 16379 / KPA171202) (Propionibacterium acnes)).